A 207-amino-acid polypeptide reads, in one-letter code: Small ribosomal subunit protein uS4 (207 aa).

A disordered region spans residues 31–55 (KCKLDSKPGQHGRTSGARTSDYGTQ). A compositionally biased stretch (polar residues) spans 42–53 (GRTSGARTSDYG). Residues 97-160 (SRLDNVVYRM…KKQARIIEAL (64 aa)) form the S4 RNA-binding domain.

The protein belongs to the universal ribosomal protein uS4 family. Part of the 30S ribosomal subunit. Contacts protein S5. The interaction surface between S4 and S5 is involved in control of translational fidelity.

Its function is as follows. One of the primary rRNA binding proteins, it binds directly to 16S rRNA where it nucleates assembly of the body of the 30S subunit. In terms of biological role, with S5 and S12 plays an important role in translational accuracy. This Burkholderia vietnamiensis (strain G4 / LMG 22486) (Burkholderia cepacia (strain R1808)) protein is Small ribosomal subunit protein uS4.